The following is a 111-amino-acid chain: Repressed By RIM101 protein 1 (111 aa).

The first 19 residues, 1–19 (MKFSTTLLALTASIAAVMS), serve as a signal peptide directing secretion. Residues 71–90 (SGASSATGGSSAAKSGSSSG) are disordered. Serine 81 is lipidated: GPI-anchor amidated serine. Residues 82 to 111 (AAKSGSSSGAGFAPVAGAGSLAAIAGLLLL) constitute a propeptide, removed in mature form.

In terms of processing, the GPI-anchor is attached to the protein in the endoplasmic reticulum and serves to target the protein to the cell surface. There, the glucosamine-inositol phospholipid moiety is cleaved off and the GPI-modified mannoprotein is covalently attached via its lipidless GPI glycan remnant to the 1,6-beta-glucan of the outer cell wall layer.

The protein resides in the secreted. It localises to the cell wall. Its subcellular location is the membrane. Probable cell wall protein required for filamentation at low pH. This is Repressed By RIM101 protein 1 (RBR1) from Candida albicans (strain SC5314 / ATCC MYA-2876) (Yeast).